The following is a 376-amino-acid chain: Arsenite methyltransferase (376 aa).

2 positions are modified to phosphoserine: S47 and S336. Residues 354–363 show a composition bias toward basic and acidic residues; the sequence is SDKMKPRHAP. Residues 354–376 form a disordered region; the sequence is SDKMKPRHAPEGTGGCCGKRKNC.

Belongs to the methyltransferase superfamily. Arsenite methyltransferase family.

The protein resides in the cytoplasm. It is found in the cytosol. It catalyses the reaction arsenic triglutathione + [thioredoxin]-dithiol + S-adenosyl-L-methionine + 2 H2O = methylarsonous acid + [thioredoxin]-disulfide + 3 glutathione + S-adenosyl-L-homocysteine + H(+). The catalysed reaction is arsenic triglutathione + 2 [thioredoxin]-dithiol + 2 S-adenosyl-L-methionine + H2O = dimethylarsinous acid + 2 [thioredoxin]-disulfide + 3 glutathione + 2 S-adenosyl-L-homocysteine + 2 H(+). The enzyme catalyses arsenic triglutathione + 3 [thioredoxin]-dithiol + 3 S-adenosyl-L-methionine = trimethylarsine + 3 [thioredoxin]-disulfide + 3 glutathione + 3 S-adenosyl-L-homocysteine + 3 H(+). In terms of biological role, catalyzes the transfer of a methyl group from AdoMet to trivalent arsenicals producing methylated and dimethylated arsenicals. It methylates arsenite to form methylarsonate, Me-AsO(3)H(2), which is reduced by methylarsonate reductase to methylarsonite, Me-As(OH)2. Methylarsonite is also a substrate and it is converted into the much less toxic compound dimethylarsinate (cacodylate), Me(2)As(O)-OH. This is Arsenite methyltransferase (As3mt) from Mus musculus (Mouse).